The chain runs to 128 residues: Small ribosomal subunit protein uS11 (128 aa).

This sequence belongs to the universal ribosomal protein uS11 family. As to quaternary structure, part of the 30S ribosomal subunit. Interacts with proteins S7 and S18. Binds to IF-3.

In terms of biological role, located on the platform of the 30S subunit, it bridges several disparate RNA helices of the 16S rRNA. Forms part of the Shine-Dalgarno cleft in the 70S ribosome. The polypeptide is Small ribosomal subunit protein uS11 (Wolbachia pipientis subsp. Culex pipiens (strain wPip)).